Here is a 224-residue protein sequence, read N- to C-terminus: Ribonuclease T (224 aa).

The region spanning 20 to 194 (VVIDVETAGF…YDTERTAELF (175 aa)) is the Exonuclease domain. Residues D23, E25, H181, and D186 each contribute to the Mg(2+) site. H181 serves as the catalytic Proton donor/acceptor.

It belongs to the RNase T family. As to quaternary structure, homodimer. The cofactor is Mg(2+).

Its function is as follows. Trims short 3' overhangs of a variety of RNA species, leaving a one or two nucleotide 3' overhang. Responsible for the end-turnover of tRNA: specifically removes the terminal AMP residue from uncharged tRNA (tRNA-C-C-A). Also appears to be involved in tRNA biosynthesis. The protein is Ribonuclease T of Enterobacter sp. (strain 638).